Consider the following 265-residue polypeptide: 3-methyl-2-oxobutanoate hydroxymethyltransferase (265 aa).

Mg(2+) contacts are provided by D46 and D85. 3-methyl-2-oxobutanoate-binding positions include 46 to 47 (DS), D85, and K114. E116 contributes to the Mg(2+) binding site. E183 acts as the Proton acceptor in catalysis.

Belongs to the PanB family. In terms of assembly, homodecamer; pentamer of dimers. The cofactor is Mg(2+).

Its subcellular location is the cytoplasm. It carries out the reaction 3-methyl-2-oxobutanoate + (6R)-5,10-methylene-5,6,7,8-tetrahydrofolate + H2O = 2-dehydropantoate + (6S)-5,6,7,8-tetrahydrofolate. The protein operates within cofactor biosynthesis; coenzyme A biosynthesis. Functionally, catalyzes the reversible reaction in which hydroxymethyl group from 5,10-methylenetetrahydrofolate is transferred onto alpha-ketoisovalerate to form ketopantoate. The chain is 3-methyl-2-oxobutanoate hydroxymethyltransferase from Pyrobaculum calidifontis (strain DSM 21063 / JCM 11548 / VA1).